A 97-amino-acid polypeptide reads, in one-letter code: Co-chaperonin GroES (97 aa).

Belongs to the GroES chaperonin family. Heptamer of 7 subunits arranged in a ring. Interacts with the chaperonin GroEL.

Its subcellular location is the cytoplasm. In terms of biological role, together with the chaperonin GroEL, plays an essential role in assisting protein folding. The GroEL-GroES system forms a nano-cage that allows encapsulation of the non-native substrate proteins and provides a physical environment optimized to promote and accelerate protein folding. GroES binds to the apical surface of the GroEL ring, thereby capping the opening of the GroEL channel. The protein is Co-chaperonin GroES of Pseudarthrobacter chlorophenolicus (strain ATCC 700700 / DSM 12829 / CIP 107037 / JCM 12360 / KCTC 9906 / NCIMB 13794 / A6) (Arthrobacter chlorophenolicus).